The following is a 317-amino-acid chain: Ribosomal large subunit pseudouridine synthase D (317 aa).

The S4 RNA-binding domain maps to 15–89 (WRLDRALASL…IPLEIVFEDE (75 aa)). Asp141 is a catalytic residue.

It belongs to the pseudouridine synthase RluA family.

Its subcellular location is the cytoplasm. It catalyses the reaction uridine(1911/1915/1917) in 23S rRNA = pseudouridine(1911/1915/1917) in 23S rRNA. Its function is as follows. Responsible for synthesis of pseudouridine from uracil at positions 1911, 1915 and 1917 in 23S ribosomal RNA. The chain is Ribosomal large subunit pseudouridine synthase D from Zymomonas mobilis subsp. mobilis (strain ATCC 31821 / ZM4 / CP4).